We begin with the raw amino-acid sequence, 762 residues long: 5-methyltetrahydropteroyltriglutamate--homocysteine methyltransferase (762 aa).

Residues 17 to 20 and Lys-111 contribute to the 5-methyltetrahydropteroyltri-L-glutamate site; that span reads REWK. Residues 435–437 and Glu-488 contribute to the L-homocysteine site; that span reads IGS. Residues 435–437 and Glu-488 contribute to the L-methionine site; that span reads IGS. 5-methyltetrahydropteroyltri-L-glutamate is bound by residues 519–520 and Trp-565; that span reads RC. L-homocysteine is bound at residue Asp-603. Asp-603 lines the L-methionine pocket. A 5-methyltetrahydropteroyltri-L-glutamate-binding site is contributed by Glu-609. Residues His-645, Cys-647, and Glu-669 each coordinate Zn(2+). His-698 serves as the catalytic Proton donor. A Zn(2+)-binding site is contributed by Cys-730.

Belongs to the vitamin-B12 independent methionine synthase family. It depends on Zn(2+) as a cofactor.

The enzyme catalyses 5-methyltetrahydropteroyltri-L-glutamate + L-homocysteine = tetrahydropteroyltri-L-glutamate + L-methionine. The protein operates within amino-acid biosynthesis; L-methionine biosynthesis via de novo pathway; L-methionine from L-homocysteine (MetE route): step 1/1. Functionally, catalyzes the transfer of a methyl group from 5-methyltetrahydrofolate to homocysteine resulting in methionine formation. This chain is 5-methyltetrahydropteroyltriglutamate--homocysteine methyltransferase, found in Bacillus cereus (strain AH820).